The sequence spans 562 residues: Glutamyl-tRNA(Gln) amidotransferase subunit B, chloroplastic/mitochondrial (562 aa).

A disordered region spans residues 48 to 76; it reads SVASNSKREPRPVKTRVMTQERGSGETQT. A compositionally biased stretch (polar residues) spans 64 to 76; sequence VMTQERGSGETQT.

The protein belongs to the GatB/GatE family. GatB subfamily. Subunit of the heterotrimeric GatCAB amidotransferase (AdT) complex, composed of A, B and C subunits.

The protein resides in the mitochondrion. It is found in the plastid. Its subcellular location is the chloroplast. It carries out the reaction L-glutamyl-tRNA(Gln) + L-glutamine + ATP + H2O = L-glutaminyl-tRNA(Gln) + L-glutamate + ADP + phosphate + H(+). Allows the formation of correctly charged Gln-tRNA(Gln) through the transamidation of misacylated Glu-tRNA(Gln) in chloroplasts and mitochondria. The reaction takes place in the presence of glutamine and ATP through an activated gamma-phospho-Glu-tRNA(Gln). This is Glutamyl-tRNA(Gln) amidotransferase subunit B, chloroplastic/mitochondrial from Physcomitrium patens (Spreading-leaved earth moss).